The chain runs to 256 residues: Pimeloyl-[acyl-carrier protein] methyl ester esterase (256 aa).

The AB hydrolase-1 domain maps to 17 to 241; sequence VYLIHGWGAN…KAAHAPFLSH (225 aa). Substrate is bound by residues tryptophan 23, 83-84, and 145-149; these read SL and FLQLQ. Residue serine 83 is the Nucleophile of the active site. Catalysis depends on residues aspartate 207 and histidine 235. A substrate-binding site is contributed by histidine 235.

It belongs to the AB hydrolase superfamily. Carboxylesterase BioH family. As to quaternary structure, monomer.

It is found in the cytoplasm. The enzyme catalyses 6-carboxyhexanoyl-[ACP] methyl ester + H2O = 6-carboxyhexanoyl-[ACP] + methanol + H(+). It functions in the pathway cofactor biosynthesis; biotin biosynthesis. Its function is as follows. The physiological role of BioH is to remove the methyl group introduced by BioC when the pimeloyl moiety is complete. It allows to synthesize pimeloyl-ACP via the fatty acid synthetic pathway through the hydrolysis of the ester bonds of pimeloyl-ACP esters. This is Pimeloyl-[acyl-carrier protein] methyl ester esterase from Neisseria meningitidis serogroup C / serotype 2a (strain ATCC 700532 / DSM 15464 / FAM18).